Consider the following 179-residue polypeptide: Insulin-like growth factor 2 (179 aa).

The N-terminal stretch at 1–24 is a signal peptide; sequence MGITAGKSMLALLAFLAFASCCYA. Residues 25–52 are b; it reads AYRPSETLCGGELVDTLQFVCGDRGFYF. 3 cysteine pairs are disulfide-bonded: C33/C71, C45/C84, and C70/C75. Positions 53 to 64 are c; the sequence is SRPSSRINRRSR. Positions 65-85 are a; sequence GIVEECCFRSCDLALLETYCA. Residues 86–91 form a d region; the sequence is APAKSE. Positions 92–179 are cleaved as a propeptide — e peptide; it reads RDVSASTTVL…GGASSEASSD (88 aa). O-linked (GalNAc...) threonine glycosylation occurs at T106. Residue S154 is glycosylated (O-linked (GalNAc...) serine). The interval 160-179 is disordered; the sequence is ALPTQDPATHGGASSEASSD. O-linked (GalNAc...) threonine glycosylation is present at T163.

This sequence belongs to the insulin family. In terms of assembly, interacts with MYORG; this interaction is required for IGF2 secretion. Interacts with integrins ITGAV:ITGB3 and ITGA6:ITGB4; integrin-binding is required for IGF2 signaling. Interacts with IGFBP2. Proteolytically processed by PCSK4, proIGF2 is cleaved at Arg-128 and Arg-92 to generate big-IGF2 and mature IGF2.

The protein resides in the secreted. The insulin-like growth factors possess growth-promoting activity. Major fetal growth hormone in mammals. Plays a key role in regulating fetoplacental development. IGF2 is influenced by placental lactogen. Also involved in tissue differentiation. In adults, involved in glucose metabolism in adipose tissue, skeletal muscle and liver. Acts as a ligand for integrin which is required for IGF2 signaling. Positively regulates myogenic transcription factor MYOD1 function by facilitating the recruitment of transcriptional coactivators, thereby controlling muscle terminal differentiation. Inhibits myoblast differentiation and modulates metabolism via increasing the mitochondrial respiration rate. Functionally, preptin undergoes glucose-mediated co-secretion with insulin, and acts as a physiological amplifier of glucose-mediated insulin secretion. Exhibits osteogenic properties by increasing osteoblast mitogenic activity through phosphoactivation of MAPK1 and MAPK3. The sequence is that of Insulin-like growth factor 2 from Ovis aries (Sheep).